The primary structure comprises 450 residues: Probable helicase D10 (450 aa).

Residues 95-240 (PIYEECDDTC…MFKDFFGYKI (146 aa)) enclose the Helicase ATP-binding domain. 108–115 (GKPGFGKT) serves as a coordination point for ATP. The DEAH box motif lies at 193-196 (DEVH). Residues 289–439 (NLAHLYVNMG…TITMTPEKAV (151 aa)) form the Helicase C-terminal domain.

The enzyme catalyses ATP + H2O = ADP + phosphate + H(+). This Escherichia phage T5 (Enterobacteria phage T5) protein is Probable helicase D10 (D10).